The chain runs to 310 residues: Aspartate carbamoyltransferase catalytic subunit (310 aa).

Residues arginine 55 and threonine 56 each contribute to the carbamoyl phosphate site. Lysine 83 lines the L-aspartate pocket. Residues arginine 105, histidine 136, and glutamine 139 each contribute to the carbamoyl phosphate site. 2 residues coordinate L-aspartate: arginine 169 and arginine 223. Positions 264 and 265 each coordinate carbamoyl phosphate.

It belongs to the aspartate/ornithine carbamoyltransferase superfamily. ATCase family. As to quaternary structure, heterododecamer (2C3:3R2) of six catalytic PyrB chains organized as two trimers (C3), and six regulatory PyrI chains organized as three dimers (R2).

The enzyme catalyses carbamoyl phosphate + L-aspartate = N-carbamoyl-L-aspartate + phosphate + H(+). It participates in pyrimidine metabolism; UMP biosynthesis via de novo pathway; (S)-dihydroorotate from bicarbonate: step 2/3. Functionally, catalyzes the condensation of carbamoyl phosphate and aspartate to form carbamoyl aspartate and inorganic phosphate, the committed step in the de novo pyrimidine nucleotide biosynthesis pathway. The sequence is that of Aspartate carbamoyltransferase catalytic subunit from Saccharopolyspora erythraea (strain ATCC 11635 / DSM 40517 / JCM 4748 / NBRC 13426 / NCIMB 8594 / NRRL 2338).